Consider the following 700-residue polypeptide: Phosphoribosylformylglycinamidine synthase subunit PurL (700 aa).

Residue His-34 is part of the active site. Tyr-37 lines the ATP pocket. Glu-79 serves as a coordination point for Mg(2+). Substrate is bound by residues 80–83 (SHNH) and Arg-102. His-81 functions as the Proton acceptor in the catalytic mechanism. Asp-103 is a Mg(2+) binding site. Gln-227 is a substrate binding site. Mg(2+) is bound at residue Asp-255. A substrate-binding site is contributed by 299–301 (ESQ). Residues Asp-476 and Gly-513 each coordinate ATP. Asn-514 contacts Mg(2+). Ser-516 serves as a coordination point for substrate.

It belongs to the FGAMS family. Monomer. Part of the FGAM synthase complex composed of 1 PurL, 1 PurQ and 2 PurS subunits.

It localises to the cytoplasm. The enzyme catalyses N(2)-formyl-N(1)-(5-phospho-beta-D-ribosyl)glycinamide + L-glutamine + ATP + H2O = 2-formamido-N(1)-(5-O-phospho-beta-D-ribosyl)acetamidine + L-glutamate + ADP + phosphate + H(+). It participates in purine metabolism; IMP biosynthesis via de novo pathway; 5-amino-1-(5-phospho-D-ribosyl)imidazole from N(2)-formyl-N(1)-(5-phospho-D-ribosyl)glycinamide: step 1/2. Part of the phosphoribosylformylglycinamidine synthase complex involved in the purines biosynthetic pathway. Catalyzes the ATP-dependent conversion of formylglycinamide ribonucleotide (FGAR) and glutamine to yield formylglycinamidine ribonucleotide (FGAM) and glutamate. The FGAM synthase complex is composed of three subunits. PurQ produces an ammonia molecule by converting glutamine to glutamate. PurL transfers the ammonia molecule to FGAR to form FGAM in an ATP-dependent manner. PurS interacts with PurQ and PurL and is thought to assist in the transfer of the ammonia molecule from PurQ to PurL. This chain is Phosphoribosylformylglycinamidine synthase subunit PurL, found in Halobacterium salinarum (strain ATCC 29341 / DSM 671 / R1).